Here is a 186-residue protein sequence, read N- to C-terminus: ATP synthase subunit delta (186 aa).

It belongs to the ATPase delta chain family. In terms of assembly, F-type ATPases have 2 components, F(1) - the catalytic core - and F(0) - the membrane proton channel. F(1) has five subunits: alpha(3), beta(3), gamma(1), delta(1), epsilon(1). F(0) has three main subunits: a(1), b(2) and c(10-14). The alpha and beta chains form an alternating ring which encloses part of the gamma chain. F(1) is attached to F(0) by a central stalk formed by the gamma and epsilon chains, while a peripheral stalk is formed by the delta and b chains.

It localises to the cell inner membrane. F(1)F(0) ATP synthase produces ATP from ADP in the presence of a proton or sodium gradient. F-type ATPases consist of two structural domains, F(1) containing the extramembraneous catalytic core and F(0) containing the membrane proton channel, linked together by a central stalk and a peripheral stalk. During catalysis, ATP synthesis in the catalytic domain of F(1) is coupled via a rotary mechanism of the central stalk subunits to proton translocation. Functionally, this protein is part of the stalk that links CF(0) to CF(1). It either transmits conformational changes from CF(0) to CF(1) or is implicated in proton conduction. This is ATP synthase subunit delta from Leptospira borgpetersenii serovar Hardjo-bovis (strain JB197).